The sequence spans 628 residues: 3-hydroxy-3-methylglutaryl-coenzyme A reductase 2 (628 aa).

The next 2 membrane-spanning stretches (helical) occupy residues 38–58 (PLYL…YFLL) and 78–98 (EIVA…FFGI). Residues 99–212 (DFVQSLIIRP…HEKTVIVTTE (114 aa)) are linker. Residue asparagine 153 is glycosylated (N-linked (GlcNAc...) asparagine). The segment at 213–628 (EDEEIIKSVV…SSKDMSNLSS (416 aa)) is catalytic. Catalysis depends on glutamate 307, which acts as the Charge relay system. Asparagine 371 is a glycosylation site (N-linked (GlcNAc...) asparagine). The active-site Charge relay system is lysine 439. The N-linked (GlcNAc...) asparagine glycan is linked to asparagine 484. The active-site Charge relay system is aspartate 515. Histidine 613 serves as the catalytic Proton donor. N-linked (GlcNAc...) asparagine glycosylation is found at asparagine 617 and asparagine 625.

Belongs to the HMG-CoA reductase family.

Its subcellular location is the endoplasmic reticulum membrane. It is found in the mitochondrion membrane. It localises to the plastid membrane. The enzyme catalyses (R)-mevalonate + 2 NADP(+) + CoA = (3S)-3-hydroxy-3-methylglutaryl-CoA + 2 NADPH + 2 H(+). It functions in the pathway metabolic intermediate biosynthesis; (R)-mevalonate biosynthesis; (R)-mevalonate from acetyl-CoA: step 3/3. Catalyzes the synthesis of mevalonate. The specific precursor of all isoprenoid compounds present in plants. This chain is 3-hydroxy-3-methylglutaryl-coenzyme A reductase 2 (HMG2), found in Gossypium hirsutum (Upland cotton).